Reading from the N-terminus, the 447-residue chain is DNA primase DnaG (447 aa).

A Toprim domain is found at 200 to 274; it reads DSIIVVEGRA…DIDYVARAPE (75 aa). 3 residues coordinate Mg(2+): Glu-206, Asp-248, and Asp-250.

It belongs to the archaeal DnaG primase family. In terms of assembly, forms a ternary complex with MCM helicase and DNA. Component of the archaeal exosome complex. Mg(2+) is required as a cofactor.

The catalysed reaction is ssDNA + n NTP = ssDNA/pppN(pN)n-1 hybrid + (n-1) diphosphate.. RNA polymerase that catalyzes the synthesis of short RNA molecules used as primers for DNA polymerase during DNA replication. Also part of the exosome, which is a complex involved in RNA degradation. Acts as a poly(A)-binding protein that enhances the interaction between heteromeric, adenine-rich transcripts and the exosome. The protein is DNA primase DnaG of Pyrococcus horikoshii (strain ATCC 700860 / DSM 12428 / JCM 9974 / NBRC 100139 / OT-3).